Consider the following 322-residue polypeptide: Biotin synthase (322 aa).

One can recognise a Radical SAM core domain in the interval 39–266 (NQIQVSSLLN…KSVVRLSAGR (228 aa)). [4Fe-4S] cluster-binding residues include cysteine 54, cysteine 58, and cysteine 61. Positions 98, 129, 189, and 261 each coordinate [2Fe-2S] cluster.

Belongs to the radical SAM superfamily. Biotin synthase family. In terms of assembly, homodimer. It depends on [4Fe-4S] cluster as a cofactor. [2Fe-2S] cluster serves as cofactor.

It catalyses the reaction (4R,5S)-dethiobiotin + (sulfur carrier)-SH + 2 reduced [2Fe-2S]-[ferredoxin] + 2 S-adenosyl-L-methionine = (sulfur carrier)-H + biotin + 2 5'-deoxyadenosine + 2 L-methionine + 2 oxidized [2Fe-2S]-[ferredoxin]. The protein operates within cofactor biosynthesis; biotin biosynthesis; biotin from 7,8-diaminononanoate: step 2/2. Functionally, catalyzes the conversion of dethiobiotin (DTB) to biotin by the insertion of a sulfur atom into dethiobiotin via a radical-based mechanism. In Ruthia magnifica subsp. Calyptogena magnifica, this protein is Biotin synthase.